The chain runs to 94 residues: Co-chaperonin GroES (94 aa).

This sequence belongs to the GroES chaperonin family. In terms of assembly, heptamer of 7 subunits arranged in a ring. Interacts with the chaperonin GroEL.

It localises to the cytoplasm. In terms of biological role, together with the chaperonin GroEL, plays an essential role in assisting protein folding. The GroEL-GroES system forms a nano-cage that allows encapsulation of the non-native substrate proteins and provides a physical environment optimized to promote and accelerate protein folding. GroES binds to the apical surface of the GroEL ring, thereby capping the opening of the GroEL channel. This is Co-chaperonin GroES from Limosilactobacillus reuteri (strain DSM 20016) (Lactobacillus reuteri).